The chain runs to 456 residues: Trigger factor (456 aa).

The PPIase FKBP-type domain maps to 192 to 277; it reads GDTVVIDFVG…IHEVKTKEVP (86 aa).

This sequence belongs to the FKBP-type PPIase family. Tig subfamily.

It localises to the cytoplasm. It catalyses the reaction [protein]-peptidylproline (omega=180) = [protein]-peptidylproline (omega=0). Functionally, involved in protein export. Acts as a chaperone by maintaining the newly synthesized protein in an open conformation. Functions as a peptidyl-prolyl cis-trans isomerase. This chain is Trigger factor, found in Streptococcus pyogenes serotype M12 (strain MGAS9429).